We begin with the raw amino-acid sequence, 287 residues long: Orotidine 5'-phosphate decarboxylase (287 aa).

The active-site Proton donor is K97.

Belongs to the OMP decarboxylase family. Type 2 subfamily.

It catalyses the reaction orotidine 5'-phosphate + H(+) = UMP + CO2. Its pathway is pyrimidine metabolism; UMP biosynthesis via de novo pathway; UMP from orotate: step 2/2. This Clostridium perfringens (strain SM101 / Type A) protein is Orotidine 5'-phosphate decarboxylase.